A 478-amino-acid chain; its full sequence is Glycogen synthase (478 aa).

Position 15 (lysine 15) interacts with ADP-alpha-D-glucose.

Belongs to the glycosyltransferase 1 family. Bacterial/plant glycogen synthase subfamily.

The catalysed reaction is [(1-&gt;4)-alpha-D-glucosyl](n) + ADP-alpha-D-glucose = [(1-&gt;4)-alpha-D-glucosyl](n+1) + ADP + H(+). Its pathway is glycan biosynthesis; glycogen biosynthesis. Its function is as follows. Synthesizes alpha-1,4-glucan chains using ADP-glucose. The protein is Glycogen synthase of Clostridium botulinum (strain Alaska E43 / Type E3).